An 801-amino-acid polypeptide reads, in one-letter code: Endonuclease MutS2 (801 aa).

336 to 343 (GPNTGGKT) is an ATP binding site. Residues 696 to 721 (AQQSKAKQKQQKIVKTKTASGSARAT) are disordered. Positions 701-710 (AKQKQQKIVK) are enriched in basic residues. Residues 726 to 801 (LDLRGVRYEA…GDGATIAELS (76 aa)) form the Smr domain.

It belongs to the DNA mismatch repair MutS family. MutS2 subfamily. In terms of assembly, homodimer. Binds to stalled ribosomes, contacting rRNA.

Its function is as follows. Endonuclease that is involved in the suppression of homologous recombination and thus may have a key role in the control of bacterial genetic diversity. Acts as a ribosome collision sensor, splitting the ribosome into its 2 subunits. Detects stalled/collided 70S ribosomes which it binds and splits by an ATP-hydrolysis driven conformational change. Acts upstream of the ribosome quality control system (RQC), a ribosome-associated complex that mediates the extraction of incompletely synthesized nascent chains from stalled ribosomes and their subsequent degradation. Probably generates substrates for RQC. The protein is Endonuclease MutS2 of Leuconostoc citreum (strain KM20).